A 252-amino-acid polypeptide reads, in one-letter code: Large ribosomal subunit protein uL30 (252 aa).

Belongs to the universal ribosomal protein uL30 family.

In terms of biological role, binds to G-rich structures in 28S rRNA and in mRNAs. Plays a regulatory role in the translation apparatus; inhibits cell-free translation of mRNAs. The protein is Large ribosomal subunit protein uL30 (RpL7) of Drosophila melanogaster (Fruit fly).